We begin with the raw amino-acid sequence, 303 residues long: Vesicle-trafficking protein SEC22c (303 aa).

The Cytoplasmic segment spans residues 1-183 (MSVIFFACVV…EPAPNFRMEP (183 aa)). The Longin domain maps to 8–119 (CVVRVRDGLP…YAFLEFDSII (112 aa)). The helical transmembrane segment at 184–204 (VTALGILSLILNIMCAALNLI) threads the bilayer. Topologically, residues 205–223 (RGVHLAEHSLQVAHEEIGN) are lumenal. Residues 224–244 (ILAFLVPFVACIFQCYLYLFY) form a helical membrane-spanning segment. At 245 to 248 (SPAR) the chain is on the cytoplasmic side. Residues 249 to 269 (TMKVVLMLLFICLGNMYLHGL) traverse the membrane as a helical segment. A topological domain (lumenal) is located at residue Arg270. Residues 271-291 (NLWQILFHIGVAFLSSYQILT) traverse the membrane as a helical segment. Over 292–303 (RQLQEKQSDCGV) the chain is Cytoplasmic.

The protein belongs to the synaptobrevin family. Ubiquitously expressed.

Its subcellular location is the endoplasmic reticulum membrane. In terms of biological role, may be involved in vesicle transport between the ER and the Golgi complex. This is Vesicle-trafficking protein SEC22c (SEC22C) from Homo sapiens (Human).